Reading from the N-terminus, the 2766-residue chain is Thyroglobulin (2766 aa).

The signal sequence occupies residues 1–20 (MTALVLWVSTLLSSVCLVAA). Tyr25 carries the post-translational modification Iodotyrosine; alternate. Position 25 is a sulfotyrosine; alternate (Tyr25). Tyr25 carries the post-translational modification Thyroxine; alternate. Triiodothyronine; alternate is present on Tyr25. Thyroglobulin type-1 domains follow at residues 32–93 (LRPC…PTVC), 94–161 (LSFC…PTRC), 162–298 (PRSC…RFRC), and 299–359 (PTKC…PPSC). 8 disulfides stabilise this stretch: Cys35/Cys53, Cys64/Cys71, Cys73/Cys93, Cys97/Cys121, Cys132/Cys139, Cys141/Cys161, Cys165/Cys184, and Cys195/Cys236. Tyr109 bears the Iodotyrosine mark. Asn111 carries N-linked (GlcNAc...) asparagine glycosylation. Tyr150 carries the iodotyrosine; alternate modification. A Diiodotyrosine; alternate modification is found at Tyr150. Asn199 carries an N-linked (GlcNAc...) asparagine glycan. Iodotyrosine occurs at positions 235 and 259. 9 disulfides stabilise this stretch: Cys302/Cys320, Cys331/Cys337, Cys339/Cys359, Cys365/Cys620, Cys408/Cys608, Cys631/Cys636, Cys638/Cys658, Cys662/Cys687, and Cys698/Cys703. 2 N-linked (GlcNAc...) asparagine glycosylation sites follow: Asn484 and Asn496. 6 Thyroglobulin type-1 domains span residues 605–658 (AQAC…RPRC), 659–726 (PTKC…AKQC), 727–922 (PSVC…IPAC), 923–1074 (PGPC…MPQC), 1075–1146 (PTNC…SAQC), and 1147–1211 (PGLC…QPAC). The residue at position 704 (Tyr704) is an Iodotyrosine; alternate. Position 704 is a thyroxine; alternate (Tyr704). A Triiodothyronine; alternate modification is found at Tyr704. Tyr704 is subject to Diiodotyrosine; alternate. 16 disulfides stabilise this stretch: Cys705–Cys726, Cys730–Cys763, Cys774–Cys899, Cys901–Cys922, Cys926–Cys1032, Cys1043–Cys1050, Cys1052–Cys1074, Cys1078–Cys1109, Cys1127–Cys1146, Cys1150–Cys1170, Cys1182–Cys1189, Cys1191–Cys1211, Cys1216–Cys1265, Cys1232–Cys1246, Cys1306–Cys1356, and Cys1331–Cys1347. The N-linked (GlcNAc...) asparagine glycan is linked to Asn748. The residue at position 785 (Tyr785) is an Iodotyrosine. Asn817 carries an N-linked (GlcNAc...) asparagine glycan. At Tyr867 the chain carries Iodotyrosine; alternate. Tyr867 is subject to Diiodotyrosine; alternate. Tyr884 is subject to Diiodotyrosine. N-linked (GlcNAc...) asparagine glycosylation occurs at Asn948. Tyr993 bears the Iodotyrosine; alternate mark. Diiodotyrosine; alternate is present on Tyr993. The N-linked (GlcNAc...) asparagine glycan is linked to Asn1141. Iodotyrosine is present on Tyr1310. Residue Tyr1310 is modified to Thyroxine. Residues Asn1349 and Asn1365 are each glycosylated (N-linked (GlcNAc...) asparagine). Disulfide bonds link Cys1441–Cys1458, Cys1461–Cys1472, Cys1475–Cys1489, Cys1492–Cys1509, Cys1513–Cys1522, Cys1542–Cys1564, Cys1602–Cys1626, Cys1606–Cys1612, and Cys1638–Cys1661. Type II repeat units follow at residues 1455-1468 (ALGCVKCPEGSFSQ), 1469-1485 (DGRCTPCPAGTYQEQAG), and 1486-1502 (SSACIPCPRGRTTITTG). The Thyroglobulin type-1 11 domain maps to 1510–1564 (VTDCQKNEAGLQCDQNGQYQASQKNRDSGEVFCVDSEGRKLQWLQTEAGLSESQC). The Type IIIA repeat unit spans residues 1602–1722 (CLTDCANDEA…GANLTDTHTY (121 aa)). 4 N-linked (GlcNAc...) asparagine glycosylation sites follow: Asn1715, Asn1729, Asn1773, and Asn1864. 4 disulfide bridges follow: Cys1723-Cys1748, Cys1727-Cys1733, Cys1732-Cys1834, and Cys1759-Cys1776. A Type IIIB repeat occupies 1723-1889 (CLLACDNDSC…LFSAEQANLW (167 aa)). Cystine bridges form between Cys1890–Cys1916, Cys1894–Cys1901, Cys1925–Cys1936, Cys1993–Cys2021, Cys1997–Cys2003, Cys2002–Cys2073, and Cys2032–Cys2045. Residues 1890-1992 (CLSRCAQEPI…GKLISNGFFE (103 aa)) form a Type IIIA repeat. A glycan (N-linked (GlcNAc...) asparagine) is linked at Asn1935. The Type IIIB repeat unit spans residues 1993 to 2125 (CERLCDRDPC…AATSNFSMAQ (133 aa)). An N-linked (GlcNAc...) asparagine glycan is attached at Asn2010. Residue Asn2120 is glycosylated (N-linked (GlcNAc...) asparagine). One copy of the Type IIIA repeat lies at 2126 to 2183 (DFCLQQCSRHQDCLVTTLQIQPGVVRCVFYPDIQNCIHSLRSHTCWLLLHEEATYIYR). 3 cysteine pairs are disulfide-bonded: Cys2128–Cys2152, Cys2132–Cys2138, and Cys2161–Cys2170. Tyr2182 bears the Iodotyrosine mark. The segment at 2186 to 2766 (GIPLVQSDVT…LEPVPKSYSK (581 aa)) is cholinesterase-like (ChEL). The N-linked (GlcNAc...) asparagine glycan is linked to Asn2249. An intrachain disulfide couples Cys2263 to Cys2280. An N-linked (GlcNAc...) asparagine glycan is attached at Asn2294. Cys2441 and Cys2452 form a disulfide bridge. Tyr2539 is subject to Thyroxine. Tyr2572 carries the iodotyrosine; alternate modification. Tyr2572 is modified (thyroxine; alternate). Triiodothyronine; alternate is present on Tyr2572. At Tyr2572 the chain carries Diiodotyrosine; alternate. Asn2581 carries an N-linked (GlcNAc...) asparagine glycan. Iodotyrosine occurs at positions 2586 and 2616. An intrachain disulfide couples Cys2590 to Cys2714. The residue at position 2696 (Tyr2696) is a Diiodotyrosine. The segment at 2729–2766 (GAKDAQLTKSEEEDLEVGPGLEEDLSGSLEPVPKSYSK) is disordered. Over residues 2739–2753 (EEEDLEVGPGLEEDL) the composition is skewed to acidic residues. Residue Tyr2764 is modified to Iodotyrosine; alternate. Thyroxine; alternate is present on Tyr2764. Tyr2764 is subject to Triiodothyronine; alternate. Tyr2764 bears the Diiodotyrosine; alternate mark.

It belongs to the type-B carboxylesterase/lipase family. As to quaternary structure, monomer. Homodimer (via ChEL region); occurs in the endoplasmic reticulum and is required for export to the Golgi apparatus. Homooligomer; disulfide-linked; stored in this form in the thyroid follicle lumen. In terms of processing, iodinated on tyrosine residues by TPO. There are 4 pairs of iodinated tyrosines used for coupling: acceptor Tyr-25 is coupled to donor Tyr-150 or Tyr-235, acceptor Tyr-2572 is coupled to donor Tyr-2539, acceptor Tyr-2764 in monomer 1 is coupled to donor Tyr-2764 in monomer 2 and acceptor Tyr-1310 in monomer 1 is coupled to donor Tyr-109 in monomer 2. Post-translationally, sulfated tyrosines are desulfated during iodination. Undergoes sequential proteolysis by cathepsins to release thyroxine (T4) and triiodothyronine (T3) hormones. In the thyroid follicle lumen, cross-linked TG (storage form) is solubilized by limited proteolysis mediated by cathepsins CTSB and/or CTSL. Partially cleaved TG is further processed by CTSK/cathepsin K and/or CTSL resulting in the release of T4. Following endocytosis, further processing occurs leading to the release of T3 and more T4 hormones. Specifically expressed in the thyroid gland.

The protein resides in the secreted. Acts as a substrate for the production of iodinated thyroid hormones thyroxine (T4) and triiodothyronine (T3). The synthesis of T3 and T4 involves iodination of selected tyrosine residues of TG/thyroglobulin followed by their oxidative coupling. Following TG re-internalization and lysosomal-mediated proteolysis, T3 and T4 are released from the polypeptide backbone leading to their secretion into the bloodstream. One dimer produces 7 thyroid hormone molecules. This chain is Thyroglobulin (Tg), found in Mus musculus (Mouse).